A 308-amino-acid polypeptide reads, in one-letter code: Tryptophan 2,3-dioxygenase (308 aa).

The tract at residues 1–37 (MKPPGDNAPAGCPFSGARAAQPAHEAPHVPGDAAGET) is disordered. Residues 77-81 (FIIQH), Tyr139, and Arg143 contribute to the substrate site. His266 provides a ligand contact to heme. Thr280 provides a ligand contact to substrate.

It belongs to the tryptophan 2,3-dioxygenase family. Homotetramer. Heme is required as a cofactor.

The catalysed reaction is L-tryptophan + O2 = N-formyl-L-kynurenine. It functions in the pathway amino-acid degradation; L-tryptophan degradation via kynurenine pathway; L-kynurenine from L-tryptophan: step 1/2. Its function is as follows. Heme-dependent dioxygenase that catalyzes the oxidative cleavage of the L-tryptophan (L-Trp) pyrrole ring and converts L-tryptophan to N-formyl-L-kynurenine. Catalyzes the oxidative cleavage of the indole moiety. The protein is Tryptophan 2,3-dioxygenase of Burkholderia ambifaria (strain MC40-6).